Consider the following 1433-residue polypeptide: Probable ATP-dependent RNA helicase spindle-E (1433 aa).

A disordered region spans residues 76 to 98 (NRTLDELDSDDEEENMQEQPSVR). Positions 81-91 (ELDSDDEEENM) are enriched in acidic residues. The Helicase ATP-binding domain maps to 127–294 (MKAIRENPVV…FATSSAFPPV (168 aa)). ATP is bound at residue 140–147 (GETGCGKT). The short motif at 240–243 (DEVH) is the DEAH box element. Positions 354–526 (QSLQSYEEAK…NSVLKAKELE (173 aa)) constitute a Helicase C-terminal domain. In terms of domain architecture, Tudor spans 937–1000 (ASAVTKGLQL…RLMPHELKRD (64 aa)).

The protein belongs to the DEAD box helicase family. DEAH subfamily.

Its subcellular location is the cytoplasm. It catalyses the reaction ATP + H2O = ADP + phosphate + H(+). In terms of biological role, probable ATP-binding RNA helicase which plays a central role during spermatogenesis and oogenesis by repressing transposable elements and preventing their mobilization, which is essential for the germline integrity. Acts via the piRNA metabolic process, which mediates the repression of transposable elements during meiosis by forming complexes composed of piRNAs and Piwi and govern the methylation and subsequent repression of transposons. Involved in the repression of LTR retrotransposon copia. Also involved in telomere regulation by repressing specialized telomeric retroelements HeT-A, TAHRE, and TART; Drosophila telomeres being maintained by transposition of specialized telomeric retroelements. Involved in telomeric trans-silencing, a repression mechanism by which a transposon or a transgene inserted in subtelomeric heterochromatin has the capacity to repress in trans in the female germline, a homologous transposon, or transgene located in euchromatin. Involved in the repression of testis-expressed Stellate genes by the homologous Su(Ste) repeats. Required for anteroposterior and dorsoventral axis formation during oogenesis. This Drosophila virilis (Fruit fly) protein is Probable ATP-dependent RNA helicase spindle-E (spn-E).